The sequence spans 699 residues: Glutamine--fructose-6-phosphate aminotransferase [isomerizing] (699 aa).

Cys2 functions as the Nucleophile in the catalytic mechanism. Positions 2–303 (CGIFGYANFS…DNDIVHISNG (302 aa)) constitute a Glutamine amidotransferase type-2 domain. SIS domains follow at residues 377 to 516 (HVSG…QNLV) and 544 to 689 (SVKS…ADFP).

It carries out the reaction D-fructose 6-phosphate + L-glutamine = D-glucosamine 6-phosphate + L-glutamate. Its pathway is nucleotide-sugar biosynthesis; UDP-N-acetyl-alpha-D-glucosamine biosynthesis; alpha-D-glucosamine 6-phosphate from D-fructose 6-phosphate: step 1/1. Involved in amino sugar synthesis (formation of chitin, supplies the amino sugars of asparagine-linked oligosaccharides of glycoproteins). The sequence is that of Glutamine--fructose-6-phosphate aminotransferase [isomerizing] (GFA1) from Encephalitozoon cuniculi (strain GB-M1) (Microsporidian parasite).